Reading from the N-terminus, the 363-residue chain is Sorting nexin-21 (363 aa).

Positions 1 to 11 (MASRLLHRLRH) are enriched in basic residues. The segment at 1–99 (MASRLLHRLR…PPPDGQRSSQ (99 aa)) is disordered. Over residues 12-28 (ALASDGPGEAAAGPEAE) the composition is skewed to low complexity. Polar residues predominate over residues 46-56 (SRLSGTLSFTS). The segment covering 57–71 (AEDDPDDEDEDDEAG) has biased composition (acidic residues). The PX domain occupies 119–236 (QRLLFEVTSA…DFFVLPELRR (118 aa)). The a 1,2-diacyl-sn-glycero-3-phospho-(1D-myo-inositol-3-phosphate) site is built by Arg161, Ser163, Lys188, and Arg202.

It belongs to the sorting nexin family. As to quaternary structure, monomer.

Its subcellular location is the cytoplasmic vesicle membrane. The protein resides in the early endosome membrane. In terms of biological role, binds to membranes enriched in phosphatidylinositol 3-phosphate (PtdIns(P3)) and phosphatidylinositol 4,5-bisphosphate. May be involved in several stages of intracellular trafficking. The protein is Sorting nexin-21 of Mus musculus (Mouse).